The following is a 3996-amino-acid chain: Probable E3 ubiquitin-protein ligase HECTD4 (3996 aa).

The helical transmembrane segment at 282 to 302 threads the bilayer; it reads TCIIRCILVVFQVVFKFFFSP. Residues 1494–1510 are compositionally biased toward polar residues; that stretch reads PTASEPDTTLTKTSPKN. Disordered regions lie at residues 1494-1524 and 1616-1637; these read PTASEPDTTLTKTSPKNSLKGDKDPGEESEA and PETVSGLSTGDKKKTAQTSICR. Thr2080 bears the Phosphothreonine mark. Disordered stretches follow at residues 2219–2245, 2859–2919, 3017–3053, and 3327–3403; these read FITSGPDPHPPPIADDESDDDDDDDIP, TSAT…PTVL, EDTKKPKDKAEGGDGKVEPEKTLAFPGTDSMEVSTSS, and FDKS…QEVP. The span at 2232-2245 shows a compositional bias: acidic residues; the sequence is ADDESDDDDDDDIP. Residues 2866–2887 are compositionally biased toward low complexity; the sequence is LSDSSSSSSSSPGQTPQSPSLL. The segment covering 2888–2897 has biased composition (basic residues); sequence SKRKKVKMKR. Composition is skewed to basic and acidic residues over residues 3017–3037, 3327–3341, and 3370–3403; these read EDTKKPKDKAEGGDGKVEPEK, FDKSKYSKAGKEQHP, and LSEKKPTVKPKSPEKSKPDEKDPEKSPTKKQEVP. The HECT domain occupies 3627 to 3996; sequence SGGDPTYAFN…IHYREDPLSG (370 aa). The active-site Glycyl thioester intermediate is Cys3964.

It localises to the membrane. The enzyme catalyses S-ubiquitinyl-[E2 ubiquitin-conjugating enzyme]-L-cysteine + [acceptor protein]-L-lysine = [E2 ubiquitin-conjugating enzyme]-L-cysteine + N(6)-ubiquitinyl-[acceptor protein]-L-lysine.. Its pathway is protein modification; protein ubiquitination. In terms of biological role, E3 ubiquitin-protein ligase which accepts ubiquitin from an E2 ubiquitin-conjugating enzyme in the form of a thioester and then directly transfers the ubiquitin to targeted substrates. In Homo sapiens (Human), this protein is Probable E3 ubiquitin-protein ligase HECTD4 (HECTD4).